A 988-amino-acid chain; its full sequence is Exportin-T (988 aa).

Belongs to the exportin family. As to expression, expressed in young leaves, growing leaf blades, young floral organs and root tips.

Its subcellular location is the nucleus. The protein localises to the cytoplasm. Functionally, probable tRNA nucleus export receptor which regulates tRNA processing and facilitates tRNA translocation across the nuclear pore complex. Is required for proper activity of the shoot apical meristem (SAM) and correct leaf initiation at different developmental stages, and may play a role in floral patterning. The chain is Exportin-T (PSD) from Arabidopsis thaliana (Mouse-ear cress).